The primary structure comprises 755 residues: SWI/SNF-related matrix-associated actin-dependent regulator of chromatin subfamily A-like protein 1 (755 aa).

Positions 7-27 (SEIAEKKRIALAKLQAKKSQL) form a coiled coil. Disordered stretches follow at residues 26–91 (QLLA…NKSS) and 104–134 (SNRE…SLSS). A compositionally biased stretch (polar residues) spans 32–63 (PATNGKSTTSATGATQHANNGKSNPNQPQAKS). Serine 63 is subject to Phosphoserine. An HARP domain is found at 139–217 (PVAVLLGNSI…KPYVHMNGIP (79 aa)). A Helicase ATP-binding domain is found at 256 to 412 (CFAIAQKGRI…FTQLQMIDGK (157 aa)). Residue 269 to 276 (DEMGLGKT) participates in ATP binding. The DESH box signature appears at 361–364 (DESH). Residues 527–681 (YLKTLVKEQK…NLQKATHTAA (155 aa)) form the Helicase C-terminal domain.

The protein belongs to the SNF2/RAD54 helicase family. SMARCAL1 subfamily.

The protein resides in the nucleus. ATP-dependent annealing helicase that catalyzes the rewinding of the stably unwound DNA. This chain is SWI/SNF-related matrix-associated actin-dependent regulator of chromatin subfamily A-like protein 1 (Marcal1), found in Drosophila melanogaster (Fruit fly).